The primary structure comprises 133 residues: Small ribosomal subunit protein uS15 (133 aa).

Belongs to the universal ribosomal protein uS15 family. Part of the 30S ribosomal subunit.

The polypeptide is Small ribosomal subunit protein uS15 (Methanosphaera stadtmanae (strain ATCC 43021 / DSM 3091 / JCM 11832 / MCB-3)).